The sequence spans 190 residues: Glutathione peroxidase 2 (190 aa).

The active site involves Sec40. Sec40 is a non-standard amino acid (selenocysteine).

This sequence belongs to the glutathione peroxidase family. As to quaternary structure, homotetramer. Mostly in liver and gastrointestinal tract, not found in heart or kidney.

It localises to the cytoplasm. Its subcellular location is the cytosol. The catalysed reaction is 2 glutathione + H2O2 = glutathione disulfide + 2 H2O. The enzyme catalyses a hydroperoxy polyunsaturated fatty acid + 2 glutathione = a hydroxy polyunsaturated fatty acid + glutathione disulfide + H2O. It carries out the reaction tert-butyl hydroperoxide + 2 glutathione = tert-butanol + glutathione disulfide + H2O. It catalyses the reaction cumene hydroperoxide + 2 glutathione = 2-phenylpropan-2-ol + glutathione disulfide + H2O. The catalysed reaction is (13S)-hydroperoxy-(9Z,11E)-octadecadienoate + 2 glutathione = (13S)-hydroxy-(9Z,11E)-octadecadienoate + glutathione disulfide + H2O. The enzyme catalyses (5S)-hydroperoxy-(6E,8Z,11Z,14Z)-eicosatetraenoate + 2 glutathione = (5S)-hydroxy-(6E,8Z,11Z,14Z)-eicosatetraenoate + glutathione disulfide + H2O. It carries out the reaction (12R)-hydroperoxy-(5Z,8Z,10E,14Z)-eicosatetraenoate + 2 glutathione = (12R)-hydroxy-(5Z,8Z,10E,14Z)-eicosatetraenoate + glutathione disulfide + H2O. It catalyses the reaction (15S)-hydroperoxy-(5Z,8Z,11Z,13E)-eicosatetraenoate + 2 glutathione = (15S)-hydroxy-(5Z,8Z,11Z,13E)-eicosatetraenoate + glutathione disulfide + H2O. In terms of biological role, catalyzes the reduction of hydroperoxides in a glutathione-dependent manner thus regulating cellular redox homeostasis. Can reduce small soluble hydroperoxides such as H2O2, cumene hydroperoxide and tert-butyl hydroperoxide, as well as several fatty acid-derived hydroperoxides. Cannot reduce phosphatidycholine hydroperoxide. This Homo sapiens (Human) protein is Glutathione peroxidase 2.